We begin with the raw amino-acid sequence, 183 residues long: Bifunctional protein PyrR (183 aa).

Residues 100-112 (VILVDDVLYTGRT) carry the PRPP-binding motif.

Belongs to the purine/pyrimidine phosphoribosyltransferase family. PyrR subfamily.

The catalysed reaction is UMP + diphosphate = 5-phospho-alpha-D-ribose 1-diphosphate + uracil. Its function is as follows. Regulates the transcription of the pyrimidine nucleotide (pyr) operon in response to exogenous pyrimidines. Functionally, also displays a weak uracil phosphoribosyltransferase activity which is not physiologically significant. This Deinococcus deserti (strain DSM 17065 / CIP 109153 / LMG 22923 / VCD115) protein is Bifunctional protein PyrR.